The following is a 277-amino-acid chain: Kallikrein-13 (277 aa).

A signal peptide spans 1–16; that stretch reads MWPLALVIASLTLALS. The N-linked (GlcNAc...) asparagine glycan is linked to Asn30. The region spanning 36–263 is the Peptidase S1 domain; sequence LPGGYTCFPH…YVLWIRETIR (228 aa). Cystine bridges form between Cys42-Cys178, Cys61-Cys77, Cys157-Cys224, Cys189-Cys203, and Cys214-Cys239. Catalysis depends on charge relay system residues His76 and Asp124. The active-site Charge relay system is the Ser218. Asn225 carries an N-linked (GlcNAc...) asparagine glycan.

It belongs to the peptidase S1 family. Kallikrein subfamily. Expressed in prostate, breast, testis and salivary gland.

It is found in the secreted. The protein is Kallikrein-13 (KLK13) of Homo sapiens (Human).